We begin with the raw amino-acid sequence, 117 residues long: Cliotide T9 (117 aa).

Positions 1–25 (MAYVRLACLAVIFFFAASVMFTVEA) are cleaved as a signal peptide. Positions 26–55 (GIPCGESCVFIPCLTTVVGCSCKNKVCYNN) form a cross-link, cyclopeptide (Gly-Asn). 3 cysteine pairs are disulfide-bonded: C29–C45, C33–C47, and C38–C52. Residues 56–117 (HVIAAEANSI…YLLKDFLKMP (62 aa)) constitute a propeptide, removed in mature form.

In terms of processing, contains 3 disulfide bonds. This is a cyclic peptide. In terms of tissue distribution, expressed in seed but not in root, nodule, flower, stem, shoot, leaf and pod (at protein level).

Functionally, probably participates in a plant defense mechanism. This chain is Cliotide T9, found in Clitoria ternatea (Butterfly pea).